The following is a 347-amino-acid chain: Holliday junction branch migration complex subunit RuvB (347 aa).

Residues 1–182 (MSAQNPVLTP…FGIPVRLSFY (182 aa)) form a large ATPase domain (RuvB-L) region. ATP contacts are provided by residues Leu21, Arg22, Gly63, Lys66, Thr67, Thr68, 129–131 (EDF), Arg172, Tyr182, and Arg219. Thr67 serves as a coordination point for Mg(2+). A small ATPAse domain (RuvB-S) region spans residues 183–253 (TVEELELIVR…IADEALTRLL (71 aa)). The head domain (RuvB-H) stretch occupies residues 256-347 (NMGLDQLDTR…QFRLTLEDDD (92 aa)). 3 residues coordinate DNA: Arg292, Arg311, and Arg316.

This sequence belongs to the RuvB family. In terms of assembly, homohexamer. Forms an RuvA(8)-RuvB(12)-Holliday junction (HJ) complex. HJ DNA is sandwiched between 2 RuvA tetramers; dsDNA enters through RuvA and exits via RuvB. An RuvB hexamer assembles on each DNA strand where it exits the tetramer. Each RuvB hexamer is contacted by two RuvA subunits (via domain III) on 2 adjacent RuvB subunits; this complex drives branch migration. In the full resolvosome a probable DNA-RuvA(4)-RuvB(12)-RuvC(2) complex forms which resolves the HJ.

The protein localises to the cytoplasm. The catalysed reaction is ATP + H2O = ADP + phosphate + H(+). In terms of biological role, the RuvA-RuvB-RuvC complex processes Holliday junction (HJ) DNA during genetic recombination and DNA repair, while the RuvA-RuvB complex plays an important role in the rescue of blocked DNA replication forks via replication fork reversal (RFR). RuvA specifically binds to HJ cruciform DNA, conferring on it an open structure. The RuvB hexamer acts as an ATP-dependent pump, pulling dsDNA into and through the RuvAB complex. RuvB forms 2 homohexamers on either side of HJ DNA bound by 1 or 2 RuvA tetramers; 4 subunits per hexamer contact DNA at a time. Coordinated motions by a converter formed by DNA-disengaged RuvB subunits stimulates ATP hydrolysis and nucleotide exchange. Immobilization of the converter enables RuvB to convert the ATP-contained energy into a lever motion, pulling 2 nucleotides of DNA out of the RuvA tetramer per ATP hydrolyzed, thus driving DNA branch migration. The RuvB motors rotate together with the DNA substrate, which together with the progressing nucleotide cycle form the mechanistic basis for DNA recombination by continuous HJ branch migration. Branch migration allows RuvC to scan DNA until it finds its consensus sequence, where it cleaves and resolves cruciform DNA. In Allorhizobium ampelinum (strain ATCC BAA-846 / DSM 112012 / S4) (Agrobacterium vitis (strain S4)), this protein is Holliday junction branch migration complex subunit RuvB.